Consider the following 236-residue polypeptide: ATP-dependent dethiobiotin synthetase BioD (236 aa).

Residue Thr-19 participates in Mg(2+) binding. Residue Lys-40 is part of the active site. Mg(2+) contacts are provided by Asp-61 and Glu-122. ATP-binding positions include Asp-61, 122 to 125 (EGVG), 182 to 183 (NT), and 211 to 213 (PRL).

This sequence belongs to the dethiobiotin synthetase family. Homodimer. Requires Mg(2+) as cofactor.

The protein resides in the cytoplasm. The catalysed reaction is (7R,8S)-7,8-diammoniononanoate + CO2 + ATP = (4R,5S)-dethiobiotin + ADP + phosphate + 3 H(+). The protein operates within cofactor biosynthesis; biotin biosynthesis; biotin from 7,8-diaminononanoate: step 1/2. Catalyzes a mechanistically unusual reaction, the ATP-dependent insertion of CO2 between the N7 and N8 nitrogen atoms of 7,8-diaminopelargonic acid (DAPA, also called 7,8-diammoniononanoate) to form a ureido ring. The polypeptide is ATP-dependent dethiobiotin synthetase BioD (Janthinobacterium sp. (strain Marseille) (Minibacterium massiliensis)).